The sequence spans 264 residues: 3-dehydroquinate dehydratase (264 aa).

3-dehydroquinate is bound by residues 50–52 (EWR) and arginine 86. The active-site Proton donor/acceptor is the histidine 148. The Schiff-base intermediate with substrate role is filled by lysine 175. 3-dehydroquinate is bound by residues arginine 217, serine 236, and glutamine 240.

It belongs to the type-I 3-dehydroquinase family. As to quaternary structure, homodimer.

The enzyme catalyses 3-dehydroquinate = 3-dehydroshikimate + H2O. The protein operates within metabolic intermediate biosynthesis; chorismate biosynthesis; chorismate from D-erythrose 4-phosphate and phosphoenolpyruvate: step 3/7. Involved in the third step of the chorismate pathway, which leads to the biosynthesis of aromatic amino acids. Catalyzes the cis-dehydration of 3-dehydroquinate (DHQ) and introduces the first double bond of the aromatic ring to yield 3-dehydroshikimate. In Albidiferax ferrireducens (strain ATCC BAA-621 / DSM 15236 / T118) (Rhodoferax ferrireducens), this protein is 3-dehydroquinate dehydratase.